We begin with the raw amino-acid sequence, 251 residues long: Xylose/arabinose import ATP-binding protein XylG (251 aa).

The ABC transporter domain maps to 5–241 (LEIRDVHKSF…EITEVMTSFA (237 aa)). ATP is bound at residue 37–44 (GDNGAGKS).

It belongs to the ABC transporter superfamily. In terms of assembly, the complex is composed of two ATP-binding proteins (XylG), two transmembrane proteins (XylH) and a solute-binding protein (XylF).

Its subcellular location is the cell membrane. It carries out the reaction D-xylose(out) + ATP + H2O = D-xylose(in) + ADP + phosphate + H(+). The catalysed reaction is L-arabinose(out) + ATP + H2O = L-arabinose(in) + ADP + phosphate + H(+). Part of the ABC transporter complex XylFGH involved in the uptake of xylose and arabinose. Responsible for energy coupling to the transport system. The protein is Xylose/arabinose import ATP-binding protein XylG of Sulfolobus acidocaldarius (strain ATCC 33909 / DSM 639 / JCM 8929 / NBRC 15157 / NCIMB 11770).